Here is an 874-residue protein sequence, read N- to C-terminus: Putative disease resistance protein At5g05400 (874 aa).

Positions 22–74 form a coiled coil; the sequence is LSRNQNRFRNLVDHVAALKKTVRQLEARRDDLLKRIKVQEDRGLNLLDEVQQW. The NB-ARC domain maps to 139 to 434; that stretch reads AQKGPIPKVE…GQGIILGSKG (296 aa). Residue 182–189 coordinates ATP; it reads GMGGVGKT. LRR repeat units follow at residues 483-505, 506-527, 528-548, 552-574, 575-597, 598-620, and 621-642; these read QKNV…EDQK, AVRR…LHCP, KLET…EFLS, ILMV…SPLY, SLRF…YALR, NLLY…HDLP, and NLEV…VRQI.

Belongs to the disease resistance NB-LRR family.

Potential disease resistance protein. The polypeptide is Putative disease resistance protein At5g05400 (Arabidopsis thaliana (Mouse-ear cress)).